The sequence spans 155 residues: UPF0305 protein MTH_811 (155 aa).

The protein belongs to the UPF0305 family.

The sequence is that of UPF0305 protein MTH_811 from Methanothermobacter thermautotrophicus (strain ATCC 29096 / DSM 1053 / JCM 10044 / NBRC 100330 / Delta H) (Methanobacterium thermoautotrophicum).